A 283-amino-acid polypeptide reads, in one-letter code: Beta-glucoside operon antiterminator (283 aa).

PRD domains follow at residues 65–170 (RIPL…SHMP) and 171–280 (EVMR…LQEQ).

Belongs to the transcriptional antiterminator BglG family. In terms of processing, phosphorylated and inactivated by ArbF (EII-Bgl). The degree of phosphorylation is dependent on the presence or absence of beta-glucosides which act as inducers of the operon expression. Addition of inducer result in the rapid dephosphorylation of ArbG.

Functionally, mediates the positive regulation of the beta-glucoside (arb) operon by functioning as a transcriptional antiterminator. This is an RNA-binding protein that recognizes a specific sequence located just upstream of two termination sites within the operon. This chain is Beta-glucoside operon antiterminator (arbG), found in Dickeya chrysanthemi (Pectobacterium chrysanthemi).